The following is a 513-amino-acid chain: MPYLLEMKNITKTFGSVKAIDNVSLRLNAGEIVSLCGENGSGKSTLMKVLCGIYPHGSYEGEIIFAGEEIQASHIRDTERKGIAIIHQELALVKELTVLENIFLGNEITHNGIMDYDLMTLRYQKLLAQVSLSISPDTRVGDLGLGQQQLVEIAKALNKQVRLLILDEPTASLTEQETSVLLDIIRDLQQHGIACIYISHKLNEVKAISDTICVIRDGQHIGTRDAAGMSEDDIITMMVGRELTALYPNEPHTTGDEILRIEHLTAWHPVNRHIKRVNDISFSLKRGEILGIAGLVGAGRTETIQCLFGVWPGQWEGKIYIDGKQVDIRNCQQAIAQGIAMVPEDRKRDGIVPVMAVGKNITLAALNKFTGGISQLDDAAEQKCILESIQQLKVKTSSPDLAIGRLSGGNQQKAILARCLLLNPRILILDEPTRGIDIGAKYEIYKLINQLVQQGIAVIVISSELPEVLGLSDRVLVMHEGKLKANLINHNLTQEQVMEAALRSEHHVEKQSV.

ABC transporter domains follow at residues 5–242 (LEMK…VGRE) and 259–505 (LRIE…LRSE). 37 to 44 (GENGSGKS) serves as a coordination point for ATP.

It belongs to the ABC transporter superfamily. Xylose importer (TC 3.A.1.2.4) family. As to quaternary structure, the complex is composed of two ATP-binding proteins (XylG), two transmembrane proteins (XylH) and a solute-binding protein (XylF).

Its subcellular location is the cell inner membrane. The catalysed reaction is D-xylose(out) + ATP + H2O = D-xylose(in) + ADP + phosphate + H(+). Functionally, part of the ABC transporter complex XylFGH involved in xylose import. Responsible for energy coupling to the transport system. This is Xylose import ATP-binding protein XylG from Shigella flexneri serotype 5b (strain 8401).